A 310-amino-acid polypeptide reads, in one-letter code: Lymphotoxin-beta (310 aa).

The Cytoplasmic segment spans residues 1 to 27 (MGALGLQGRGGRPQGTGCLLLAVAGAT). The helical; Signal-anchor for type II membrane protein transmembrane segment at 28–48 (SLVTLLLAVPITVLAVLALVP) threads the bilayer. Residues 49–310 (QEQGGLVMES…LGKCLHSANV (262 aa)) are Extracellular-facing. A disordered region spans residues 67-86 (QGLSKSNGLPSRLHSQIPSS). In terms of domain architecture, THD spans 138–293 (PAAHLIGAWM…GKTFFGAVMV (156 aa)). An N-linked (GlcNAc...) asparagine glycan is attached at asparagine 272.

This sequence belongs to the tumor necrosis factor family. Heterotrimer of either two LTB and one LTA subunits or (less prevalent) two LTA and one LTB subunits.

It is found in the membrane. Functionally, cytokine that binds to LTBR/TNFRSF3. May play a specific role in immune response regulation. Provides the membrane anchor for the attachment of the heterotrimeric complex to the cell surface. The chain is Lymphotoxin-beta (LTB) from Marmota monax (Woodchuck).